Here is a 249-residue protein sequence, read N- to C-terminus: Proteasome activator complex subunit 1 (249 aa).

A disordered region spans residues 60–101 (PLDIPVPDPVKEKEKGERKKQQEKEDKDEKKKGEDEDKGPPC). Over residues 68–98 (PVKEKEKGERKKQQEKEDKDEKKKGEDEDKG) the composition is skewed to basic and acidic residues.

This sequence belongs to the PA28 family. In terms of assembly, heterodimer of PSME1 and PSME2, which forms a hexameric ring. PSME1 can form homoheptamers.

Its function is as follows. Implicated in immunoproteasome assembly and required for efficient antigen processing. The PA28 activator complex enhances the generation of class I binding peptides by altering the cleavage pattern of the proteasome. The sequence is that of Proteasome activator complex subunit 1 (PSME1) from Macaca fascicularis (Crab-eating macaque).